Reading from the N-terminus, the 94-residue chain is Large ribosomal subunit protein uL29 (94 aa).

Residues 66–94 form a disordered region; it reads NPGERKSRVLSRAKRKKKNLARLSAKVKG. Residues 73–94 are compositionally biased toward basic residues; it reads RVLSRAKRKKKNLARLSAKVKG.

Belongs to the universal ribosomal protein uL29 family.

This Leptospira borgpetersenii serovar Hardjo-bovis (strain JB197) protein is Large ribosomal subunit protein uL29.